Reading from the N-terminus, the 364-residue chain is Mannose-1-phosphate guanylyltransferase catalytic subunit beta (364 aa).

Positions 2–220 (KALILVGGYG…PGFWMDVGQP (219 aa)) are substrate-binding domain. A GDP-alpha-D-mannose-binding site is contributed by aspartate 109. A Mg(2+)-binding site is contributed by aspartate 109. The active site involves lysine 160. Aspartate 216 serves as a coordination point for GDP-alpha-D-mannose. Aspartate 216 is a Mg(2+) binding site. Positions 243 to 364 (ATGSNIHGTA…VNVPSKDIIM (122 aa)) are hexapeptide repeat domain.

The protein belongs to the transferase hexapeptide repeat family. In terms of assembly, component of the GMPPA-GMPPB mannose-1-phosphate guanylyltransferase complex composed of 4 GMPPA subunits and 8 tag-335/GMPPB subunits; the complex is organized into three layers, a central layer made up of 2 GMPPA dimers sandwiched between two layers each made up of 2 tag-335/GMPPB dimers. Catalytic activity of tag-335/GMPPB is reduced when part of the complex and binding of GDP-alpha-D-Mannose by GMPPA induces allosteric feedback inhibition of tag-335/GMPPB. It depends on Mg(2+) as a cofactor.

The enzyme catalyses alpha-D-mannose 1-phosphate + GTP + H(+) = GDP-alpha-D-mannose + diphosphate. It participates in nucleotide-sugar biosynthesis; GDP-alpha-D-mannose biosynthesis; GDP-alpha-D-mannose from alpha-D-mannose 1-phosphate (GTP route): step 1/1. Its activity is regulated as follows. Enzyme activity is reduced by incorporation into the GMPPA-GMPPB mannose-1-phosphate guanylyltransferase complex. Allosterically inhibited, when part of the GMPPA-GMPPB complex, by GDP-alpha-D-mannose binding to GMPPA. Catalytic subunit of the GMPPA-GMPPB mannose-1-phosphate guanylyltransferase complex. Catalyzes the formation of GDP-mannose, an essential precursor of glycan moieties of glycoproteins and glycolipids. Can catalyze the reverse reaction in vitro. Together with GMPPA regulates GDP-alpha-D-mannose levels. The sequence is that of Mannose-1-phosphate guanylyltransferase catalytic subunit beta from Caenorhabditis briggsae.